A 294-amino-acid chain; its full sequence is UDP-3-O-acyl-N-acetylglucosamine deacetylase (294 aa).

3 residues coordinate Zn(2+): histidine 75, histidine 232, and aspartate 236. Histidine 259 (proton donor) is an active-site residue.

The protein belongs to the LpxC family. It depends on Zn(2+) as a cofactor.

The catalysed reaction is a UDP-3-O-[(3R)-3-hydroxyacyl]-N-acetyl-alpha-D-glucosamine + H2O = a UDP-3-O-[(3R)-3-hydroxyacyl]-alpha-D-glucosamine + acetate. It participates in glycolipid biosynthesis; lipid IV(A) biosynthesis; lipid IV(A) from (3R)-3-hydroxytetradecanoyl-[acyl-carrier-protein] and UDP-N-acetyl-alpha-D-glucosamine: step 2/6. Catalyzes the hydrolysis of UDP-3-O-myristoyl-N-acetylglucosamine to form UDP-3-O-myristoylglucosamine and acetate, the committed step in lipid A biosynthesis. This Campylobacter jejuni subsp. jejuni serotype O:6 (strain 81116 / NCTC 11828) protein is UDP-3-O-acyl-N-acetylglucosamine deacetylase.